The primary structure comprises 545 residues: Capsular polysaccharide phosphotransferase SacB (545 aa).

Belongs to the stealth family.

Part of a capsular biosynthesis operon and has been suggested to be the polymerase that links individual UDP-N-acetyl-D-mannosamine monomers. In serotype A the capsule is composed of repeated units of (alpha 1-6)-linked N-acetyl-D-mannosamine-1-phosphate. Non-polar disruption of this open reading frame prevented capsule synthesis. This chain is Capsular polysaccharide phosphotransferase SacB (sacB), found in Neisseria meningitidis serogroup A.